A 272-amino-acid polypeptide reads, in one-letter code: MSTLEIIILALLQGLTEFLPISSSAHLILPSQVLGWQDQGLAFDVAVHVGTLLAVMMYFRKELGVMAVAWLGTVGVGPEKGRGGFDAKLSWWILLATIPAGLFGLLGKDFIEEHLRSALVIAMTTLLFGFLLGFADIKAGKRTEHKPMEKLGLKGAMLIGLAQAVALIPGTSRSGITMTIGLMLGLSRDNAARFSFLLSIPAIAMAGSYLTLKLILSTESVDWFAMGLGSLLAFVSAYACIHYFLILLEKLGMMPFVIYRLILGVGLLWFIL.

Helical transmembrane passes span 1–21 (MSTL…FLPI), 39–59 (QGLA…MMYF), 91–111 (WWIL…KDFI), 117–137 (SALV…FADI), 151–171 (LGLK…IPGT), 196–216 (FLLS…KLIL), 228–248 (LGSL…LILL), and 251–271 (LGMM…LWFI).

This sequence belongs to the UppP family.

It is found in the cell inner membrane. It carries out the reaction di-trans,octa-cis-undecaprenyl diphosphate + H2O = di-trans,octa-cis-undecaprenyl phosphate + phosphate + H(+). In terms of biological role, catalyzes the dephosphorylation of undecaprenyl diphosphate (UPP). Confers resistance to bacitracin. In Colwellia psychrerythraea (strain 34H / ATCC BAA-681) (Vibrio psychroerythus), this protein is Undecaprenyl-diphosphatase.